A 118-amino-acid chain; its full sequence is MPFLELDTNLPANRVPAGLEKRLCAAAASILGKPADRVNVTVRPGLAMALSGSTEPCAQLSISSIGVVGTAEDNRSHSAHFFEFLTKELALGQDRILIRFFPLESWQIGKIGTVMTFL.

Proline 2 carries the post-translational modification N-acetylproline. N6-acetyllysine is present on lysine 33.

The protein belongs to the MIF family. As to quaternary structure, homotrimer. As to expression, highly expressed in the liver and at lower levels in the heart, lung and pancreas.

Its subcellular location is the cytoplasm. The catalysed reaction is D-dopachrome + H(+) = 5,6-dihydroxyindole + CO2. Tautomerization of D-dopachrome with decarboxylation to give 5,6-dihydroxyindole (DHI). This chain is D-dopachrome decarboxylase (DDT), found in Homo sapiens (Human).